Consider the following 1307-residue polypeptide: Light-sensor Protein kinase (1307 aa).

The 180-residue stretch at 215–394 folds into the GAF domain; it reads DIELLCDTIV…VFGMQLNLHV (180 aa). Cysteine 320 serves as a coordination point for phytochromobilin. The PAS domain occupies 609–680; the sequence is LANEMSRVLE…RLLSLALQGE (72 aa). Residues 683–739 enclose the PAC domain; sequence QNVEIKLKTFGTQTTERAVILIVNACCSRDASDFVVGVFFVGQDVTEQRMFMDRFTR. The tract at residues 779–1003 is hinge; sequence DHATGSVERL…WSFSEKFFQW (225 aa). The 304-residue stretch at 1004–1307 folds into the Protein kinase domain; the sequence is IQITGSLGSG…DSYPSTEEPS (304 aa). ATP is bound by residues 1010-1018 and lysine 1031; that span reads LGSGSSATV. The active site involves aspartate 1127.

It in the N-terminal section; belongs to the phytochrome family. This sequence in the C-terminal section; belongs to the protein kinase superfamily. Ser/Thr protein kinase family. Homodimer. Post-translationally, contains one covalently linked phytochromobilin chromophore.

Its subcellular location is the cell membrane. The catalysed reaction is L-seryl-[protein] + ATP = O-phospho-L-seryl-[protein] + ADP + H(+). It catalyses the reaction L-threonyl-[protein] + ATP = O-phospho-L-threonyl-[protein] + ADP + H(+). Regulatory photoreceptor which exists in two forms that are reversibly interconvertible by light: the Pr form that absorbs maximally in the red region of the spectrum and the Pfr form that absorbs maximally in the far-red region. Photoconversion of Pr to Pfr induces an array of morphogenic responses, whereas reconversion of Pfr to Pr cancels the induction of those responses. Pfr controls the expression of a number of nuclear genes including those encoding the small subunit of ribulose-bisphosphate carboxylase, chlorophyll A/B binding protein, protochlorophyllide reductase, rRNA, etc. It also controls the expression of its own gene(s) in a negative feedback fashion. This chain is Light-sensor Protein kinase (PHY1), found in Ceratodon purpureus (Fire moss).